The sequence spans 387 residues: Structural protein ORF387 (387 aa).

A coiled-coil region spans residues K315–S387. The interval L365 to S387 is disordered.

The protein resides in the virion. The polypeptide is Structural protein ORF387 (Acidianus convivator (ATV)).